Consider the following 256-residue polypeptide: Protein YABBY 4 (256 aa).

The C4-type zinc finger occupies 30-57; the sequence is CNCCDTILAVGVPCSSLFKTVTVRCGHC. The segment at 127-168 is disordered; the sequence is SCASNAPAMQMPPAKPVQQEPELPKNAPASANRPPEKRQRVP.

The protein belongs to the YABBY family. As to expression, preferentially expressed in immature organs containing meristems and organ primordia. Expressed in phloem of developing vascular tissues of young seedling shoots. Expressed in the phloem of midvein vasculature of young leaves. Does not show polar expression pattern in leaf primordia.

The protein resides in the nucleus. Seems to be associated with phloem cell differentiation. The sequence is that of Protein YABBY 4 (YAB4) from Oryza sativa subsp. japonica (Rice).